A 219-amino-acid chain; its full sequence is RNA chaperone ProQ (219 aa).

A disordered region spans residues 102 to 160; sequence TLKESQDKAKAKRAERSKDEGDAADKAPRKPKRKPQPQARRDAKPAAKDKPKAAPKAPA. Basic and acidic residues-rich tracts occupy residues 105-129 and 140-153; these read ESQD…DKAP and ARRD…DKPK.

It belongs to the ProQ family.

Its subcellular location is the cytoplasm. Its function is as follows. RNA chaperone with significant RNA binding, RNA strand exchange and RNA duplexing activities. In Shewanella amazonensis (strain ATCC BAA-1098 / SB2B), this protein is RNA chaperone ProQ.